The chain runs to 325 residues: Fructose-1,6-bisphosphatase class 1 (325 aa).

Glu84, Asp103, Leu105, and Asp106 together coordinate Mg(2+). Substrate is bound by residues 106–109, Asn196, and Lys262; that span reads DGSS. Glu268 is a binding site for Mg(2+).

The protein belongs to the FBPase class 1 family. Homotetramer. The cofactor is Mg(2+).

The protein resides in the cytoplasm. It carries out the reaction beta-D-fructose 1,6-bisphosphate + H2O = beta-D-fructose 6-phosphate + phosphate. It functions in the pathway carbohydrate biosynthesis; gluconeogenesis. This chain is Fructose-1,6-bisphosphatase class 1, found in Shewanella oneidensis (strain ATCC 700550 / JCM 31522 / CIP 106686 / LMG 19005 / NCIMB 14063 / MR-1).